We begin with the raw amino-acid sequence, 525 residues long: Protein shisa-6 (525 aa).

A signal peptide spans 1-30; the sequence is MALRRLLLPPLLLSLLLSLASLHLPPGADA. Over 31-180 the chain is Extracellular; sequence ARGRSGNRTL…NKYDPEKDKT (150 aa). Residues asparagine 37 and asparagine 62 are each glycosylated (N-linked (GlcNAc...) asparagine). The helical transmembrane segment at 181–201 threads the bilayer; that stretch reads NFTVYITCGVIAFVIVAGVFA. At 202-525 the chain is on the cytoplasmic side; it reads KVSYDKAHRP…YTASKTEVTV (324 aa). The interval 241 to 294 is disordered; sequence ISAIDTSPKENTPVRSTSKNHYTPVRTAKQTPGDRQYNHPILSSATQTPTHEKP. Positions 243–261 are enriched in polar residues; sequence AIDTSPKENTPVRSTSKNH. Serine 416, serine 422, and serine 434 each carry phosphoserine. Threonine 458 is modified (phosphothreonine). The disordered stretch occupies residues 469–495; sequence MHSHPSASNNSYATLGQSQTAAKRHAF. Polar residues predominate over residues 473–489; it reads PSASNNSYATLGQSQTA. Threonine 502 is subject to Phosphothreonine. Positions 522 to 525 match the PDZ-binding motif; it reads EVTV.

It belongs to the shisa family. Component of the postsynaptic hippocampal AMPA-type glutamate receptor (AMPAR) complex, at least composed of pore forming AMPAR subunits GRIA1, GRIA2 and GRIA3 and AMPAR auxiliary proteins SHISA6 and SHISA7. Interacts (via PDZ-binding motif) with DLG4/PSD-95 (via PDZ domain); the interaction is direct. In terms of processing, N-glycosylated. As to expression, highly expressed in cerebellum and hippocampal neurons: CA1 stratum oriens and stratum radiatum, CA3 stratum oriens and stratum lucidum, and the dentate gyrus polymorphic layer. Expressed in other brain structures including olfactory bulb, cortex, amygdala and midbrain (at protein level). Also expressed in a subset of spermatogonial stem cells. Also expressed in eye, heart, kidney, lung, muscle and spleen. Isoform 2: Specifically expressed in hippocampus.

It localises to the postsynaptic density membrane. In terms of biological role, involved in maintenance of high-frequency synaptic transmission at hippocampal CA3-CA1 synapses. Regulates AMPA-type glutamate receptor (AMPAR) immobilization at postsynaptic density keeping the channels in an activated state in the presence of glutamate and preventing synaptic depression. May play a role in self-renewal and differentiation of spermatogonial stem cells by inhibiting canonical Wnt signaling pathway. The protein is Protein shisa-6 of Mus musculus (Mouse).